Consider the following 728-residue polypeptide: Phomopsene synthase (728 aa).

The segment at 1–327 (MEYRYSYVID…PRYHSDQSLD (327 aa)) is terpene cyclase. The Mg(2+) site is built by Asp94 and Asp98. Residues Asp94, Asp98, 181 to 184 (RIVD), Asn226, 230 to 234 (SWEKE), and 319 to 320 (RY) each bind substrate. The DDXXD 1 motif lies at 94-98 (DDLVD). The NSE/DTE signature appears at 226–234 (NDVQSWEKE). Residues 328-728 (EMMVARMKYG…FRFLLSLLKV (401 aa)) are prenyltransferase. The span at 352 to 363 (ENRGTKRTHQDD) shows a compositional bias: basic and acidic residues. Residues 352–379 (ENRGTKRTHQDDTEGVQSVKRFNGASTK) form a disordered region. Repeat copies occupy residues 381–386 (GINGTN), 387–392 (GINGLN), and 393–398 (GINGSN). Residues 381–398 (GINGTNGINGLNGINGSN) are 3 X 6 AA approximate tandem repeats. Residues Lys447, Arg450, and His479 each coordinate isopentenyl diphosphate. Residues Asp486 and Asp490 each contribute to the Mg(2+) site. The DDXXD 2 motif lies at 486-490 (DDVQD). Arg495 contributes to the dimethylallyl diphosphate binding site. An isopentenyl diphosphate-binding site is contributed by Arg496. Lys574, Thr575, Gln610, Asn617, Lys627, and Lys637 together coordinate dimethylallyl diphosphate.

In the N-terminal section; belongs to the terpene synthase family. This sequence in the C-terminal section; belongs to the FPP/GGPP synthase family. As to quaternary structure, hexamer. Mg(2+) serves as cofactor.

It catalyses the reaction isopentenyl diphosphate + (2E,6E)-farnesyl diphosphate = (2E,6E,10E)-geranylgeranyl diphosphate + diphosphate. Its pathway is secondary metabolite biosynthesis; terpenoid biosynthesis. Bifunctional terpene synthase; part of the gene cluster that mediates the biosynthesis of the diterpene methyl phomopsenonate. At first, the universal precursor of diterpene, geranylgeranyl diphosphate (GGPP) is provided and is cyclized by the unusual bifunctional terpene synthase PaPS to give phomopsene. The C-terminal prenyltransferase domain of PaPS catalyzes formation of GGPP, whereas the N-terminal terpene cyclase domain catalyzes the cyclization of GGPP to phomopsene. Since the oxidation of a methylgroup to a carboxyl group is frequently catalyzed by a cytochrome P450 monooxygenase, the C-16 methyl group would be oxidized by the cluster-specific cytochrome P450 monooxygenase ORF3. Subsequently, oxidation of the allylic position and methylation of the carboxyl group may give methyl phomopsenonate. Although further study is necessary to identify genes such as a monooxygenase and a methyltransferase, the predicted functions of genes on the cluster are correlated with the structure of methyl phomopsenonate. This is Phomopsene synthase from Phomopsis amygdali (Fusicoccum amygdali).